We begin with the raw amino-acid sequence, 592 residues long: Aspartate--tRNA ligase (592 aa).

Glu177 serves as a coordination point for L-aspartate. The tract at residues 201-204 (QIFK) is aspartate. Arg223 contributes to the L-aspartate binding site. Residues 223–225 (RDE) and Gln232 each bind ATP. L-aspartate is bound at residue His451. Glu485 serves as a coordination point for ATP. Arg492 contributes to the L-aspartate binding site. 537 to 540 (GLDR) is a binding site for ATP.

This sequence belongs to the class-II aminoacyl-tRNA synthetase family. Type 1 subfamily. In terms of assembly, homodimer.

Its subcellular location is the cytoplasm. The enzyme catalyses tRNA(Asp) + L-aspartate + ATP = L-aspartyl-tRNA(Asp) + AMP + diphosphate. Functionally, catalyzes the attachment of L-aspartate to tRNA(Asp) in a two-step reaction: L-aspartate is first activated by ATP to form Asp-AMP and then transferred to the acceptor end of tRNA(Asp). The protein is Aspartate--tRNA ligase of Bacillus licheniformis (strain ATCC 14580 / DSM 13 / JCM 2505 / CCUG 7422 / NBRC 12200 / NCIMB 9375 / NCTC 10341 / NRRL NRS-1264 / Gibson 46).